Reading from the N-terminus, the 363-residue chain is tRNA/tmRNA (uracil-C(5))-methyltransferase (363 aa).

S-adenosyl-L-methionine contacts are provided by Gln-187, Tyr-215, Asn-220, Glu-236, and Asp-296. Cys-321 (nucleophile) is an active-site residue. Glu-355 acts as the Proton acceptor in catalysis.

Belongs to the class I-like SAM-binding methyltransferase superfamily. RNA M5U methyltransferase family. TrmA subfamily.

It carries out the reaction uridine(54) in tRNA + S-adenosyl-L-methionine = 5-methyluridine(54) in tRNA + S-adenosyl-L-homocysteine + H(+). It catalyses the reaction uridine(341) in tmRNA + S-adenosyl-L-methionine = 5-methyluridine(341) in tmRNA + S-adenosyl-L-homocysteine + H(+). Dual-specificity methyltransferase that catalyzes the formation of 5-methyluridine at position 54 (m5U54) in all tRNAs, and that of position 341 (m5U341) in tmRNA (transfer-mRNA). This chain is tRNA/tmRNA (uracil-C(5))-methyltransferase, found in Pseudomonas aeruginosa (strain LESB58).